The following is a 397-amino-acid chain: DnaJ protein homolog 1 (397 aa).

One can recognise a J domain in the interval 1–52; sequence KNASPDDLKKAYRKAAIKNHPDKGGDPEKFKELAQAYDVLSDPEKREIYDQY. Residues 114–198 form a CR-type zinc finger; that stretch reads GTSKKLSLSR…CKGEKVVQEK (85 aa). 4 CXXCXGXG motif repeats span residues 127–134, 143–150, 170–177, and 186–193; these read CSKCNGKG, CASCQGSG, CNDCKGTG, and CPLCKGEK. A disordered region spans residues 367–397; that stretch reads MRRKQHQHAQEAYDEDDEGHGGGQRVQCAQQ. Cys394 carries the cysteine methyl ester modification. Residue Cys394 is the site of S-farnesyl cysteine attachment. Positions 395–397 are cleaved as a propeptide — removed in mature form; the sequence is AQQ.

Its subcellular location is the membrane. Its function is as follows. Plays a continuous role in plant development probably in the structural organization of compartments. This Allium porrum (Leek) protein is DnaJ protein homolog 1 (DNAJ1).